The primary structure comprises 138 residues: Putative pre-16S rRNA nuclease (138 aa).

It belongs to the YqgF nuclease family.

Its subcellular location is the cytoplasm. Its function is as follows. Could be a nuclease involved in processing of the 5'-end of pre-16S rRNA. The chain is Putative pre-16S rRNA nuclease from Caldicellulosiruptor saccharolyticus (strain ATCC 43494 / DSM 8903 / Tp8T 6331).